The chain runs to 796 residues: Conidiophore development regulator abaA (796 aa).

Residues 133–207 (GKDGEPVWSD…QVLDSFLKGD (75 aa)) constitute a DNA-binding region (TEA). Residues 215–254 (REQSDRSTAQTQPVGPRWRTSMDHLPSSHYGTHATSSYPE) form a disordered region. Residues 243-252 (HYGTHATSSY) show a composition bias toward polar residues. A leucine-zipper-like region spans residues 341–362 (LSDVNDPLNCEIILLETNLELM). A disordered region spans residues 612–643 (EGLSDKTAPTSVLDPFPNLTQQTTSQTAGINV). A compositionally biased stretch (polar residues) spans 629–643 (NLTQQTTSQTAGINV).

Belongs to the TEC1 family.

Its subcellular location is the nucleus. BrlA, abaA and wetA are pivotal regulators of conidiophore development and conidium maturation. They act individually and together to regulate their own expression and that of numerous other sporulation-specific gene. Controls temporal and spatial specificity in Aspergillus development. Directs the differentiation of phialides and is continuously required for maintenance of their function. Expression of abaA leads to activation of brlA and wetA, cessation of vegetative growth, and accentuated cellular vacuolization. Binds to the sequence 5'-CATTCY-3', where Y is a pyrimidine, making both major- and minor-groove contacts. Multiple abaA binding sites are present in the cis-acting regulatory regions of several developmentally controlled structural genes as well as those of the upstream regulatory gene brlA, the downstream regulatory gene wetA, and abaA itself. This is Conidiophore development regulator abaA from Emericella nidulans (strain FGSC A4 / ATCC 38163 / CBS 112.46 / NRRL 194 / M139) (Aspergillus nidulans).